The primary structure comprises 122 residues: MIQPQTRLNVADNSGARELMCIRIIGASNRRYAHIGDIIVAVIKEALPSTSLERSEVVRAVIVRTCKELKCDDGIIIRYDDNAAVVIDQEGNPKGTRVFGAIAHELRELSFTKIVSLAPEVL.

Belongs to the universal ribosomal protein uL14 family. Part of the 50S ribosomal subunit.

The protein resides in the plastid. It localises to the chloroplast. Binds to 23S rRNA. The protein is Large ribosomal subunit protein uL14c of Oenothera biennis (German evening primrose).